We begin with the raw amino-acid sequence, 422 residues long: Tyrosine--tRNA ligase 1 (422 aa).

Tyr36 contacts L-tyrosine. A 'HIGH' region motif is present at residues 41 to 50 (PTAGSLHIGH). Tyr173 and Gln177 together coordinate L-tyrosine. The short motif at 233–237 (KFGKT) is the 'KMSKS' region element. Lys236 provides a ligand contact to ATP. The S4 RNA-binding domain occupies 355–419 (SDVVTLLLET…GKKQFAMVKL (65 aa)).

It belongs to the class-I aminoacyl-tRNA synthetase family. TyrS type 1 subfamily. Homodimer.

Its subcellular location is the cytoplasm. The catalysed reaction is tRNA(Tyr) + L-tyrosine + ATP = L-tyrosyl-tRNA(Tyr) + AMP + diphosphate + H(+). In terms of biological role, catalyzes the attachment of tyrosine to tRNA(Tyr) in a two-step reaction: tyrosine is first activated by ATP to form Tyr-AMP and then transferred to the acceptor end of tRNA(Tyr). The chain is Tyrosine--tRNA ligase 1 from Vibrio vulnificus (strain CMCP6).